A 95-amino-acid polypeptide reads, in one-letter code: RING finger protein Z (95 aa).

Positions 1-16 (MGNSKSKSNPSSSSES) are enriched in low complexity. The segment at 1–23 (MGNSKSKSNPSSSSESQKGAPTV) is disordered. Residue Gly2 is the site of N-myristoyl glycine; by host attachment. An RING-type; atypical zinc finger spans residues 40–76 (CKCCWFADKNLIKCSDHYLCLRCLNVMLKNSDLCNIC). The short motif at 90 to 93 (PSAP) is the PTAP/PSAP motif element.

Belongs to the arenaviridae Z protein family. In terms of assembly, interacts with protein NP; this interaction probably directs the encapsidated genome to budding sites. Interacts (via RING domain) with polymerase L; this interaction inhibits viral transcription and replication, Z partially blocks the product exit tunnel for the releasing nascent RNA product. Interacts with the glycoprotein complex; this interaction plays a role in virion budding. Interacts with host eIF4E; this interaction results in eIF4E reduced affinity for its substrate, the 5'-m7 G cap structure. Interacts (via late-budding domain) with host TSG101; this interaction is essential for budding and release of viral particles. Interacts with host RPLP0; this interaction may serve to load ribosome-like particles inside the virion. Interacts with host PML; this interaction induces PML bodies redistribution in the cytoplasm upon viral infection. In terms of processing, myristoylation is required for the role of RING finger protein Z in assembly and budding.

The protein localises to the virion. It localises to the host cytoplasm. Its subcellular location is the host perinuclear region. The protein resides in the host cell membrane. In terms of biological role, plays a crucial role in virion assembly and budding. Expressed late in the virus life cycle, it acts as an inhibitor of viral transcription and RNA synthesis by interacting with the viral polymerase L. Presumably recruits the NP encapsidated genome to cellular membranes at budding sites via direct interaction with NP. Plays critical roles in the final steps of viral release by interacting with host TSG101, a member of the vacuolar protein-sorting pathway and using other cellular host proteins involved in vesicle formation pathway. The budding of the virus progeny occurs after association of protein Z with the viral glycoprotein complex SSP-GP1-GP2 at the cell periphery, step that requires myristoylation of protein Z. Also selectively represses protein production by associating with host eIF4E. In cell-based minigenome assay, has an inhibitory effect on the ribonucleoprotein machinery (vRNP), which is responsible for the replication and transcription of the viral genome. In Guanarito mammarenavirus (isolate Human/Venezuela/NH-95551/1990) (GTOV), this protein is RING finger protein Z.